Here is a 535-residue protein sequence, read N- to C-terminus: Large neutral amino acids transporter small subunit 2 (535 aa).

Positions Met-1–Gly-17 are enriched in basic and acidic residues. The disordered stretch occupies residues Met-1 to Gly-30. Residues Met-1–Ser-44 lie on the Cytoplasmic side of the membrane. Ser-29 carries the phosphoserine modification. Residues Ala-45–Val-65 form a helical membrane-spanning segment. Ile-53 provides a ligand contact to L-leucine. Topologically, residues Leu-66–Gly-73 are extracellular. Residues Leu-74–Glu-95 traverse the membrane as a helical segment. Residues Leu-96–Gly-116 lie on the Cytoplasmic side of the membrane. A helical transmembrane segment spans residues Leu-117 to Pro-149. Asn-134 lines the L-tryptophan pocket. Residues Leu-150–Pro-157 lie on the Extracellular side of the membrane. The helical transmembrane segment at Glu-158 to Ser-178 threads the bilayer. Topologically, residues Ser-179–Arg-181 are cytoplasmic. The chain crosses the membrane as a helical span at residues Trp-182–Cys-210. At Lys-211–Asp-230 the chain is on the extracellular side. A helical membrane pass occupies residues Ile-231–Asn-252. Gly-246 is a binding site for L-leucine. Residues Tyr-253–Leu-265 lie on the Cytoplasmic side of the membrane. The helical transmembrane segment at Pro-266–Tyr-287 threads the bilayer. Residues Val-288–Gly-312 lie on the Extracellular side of the membrane. A helical transmembrane segment spans residues Val-313–Ser-338. Topologically, residues Arg-339–Pro-364 are cytoplasmic. A helical membrane pass occupies residues Ile-365 to Ser-382. At Asp-383 to Thr-386 the chain is on the extracellular side. A helical transmembrane segment spans residues Leu-387–Val-408. An L-tryptophan-binding site is contributed by Asn-395. The Cytoplasmic portion of the chain corresponds to Leu-409–Asn-423. The next 2 helical transmembrane spans lie at Leu-424–Pro-446 and Val-447–Gly-466. The Cytoplasmic portion of the chain corresponds to Val-467 to Pro-535. Positions Ser-502–Pro-535 are disordered. Over residues Gln-514 to Pro-523 the composition is skewed to polar residues.

The protein belongs to the amino acid-polyamine-organocation (APC) superfamily. L-type amino acid transporter (LAT) (TC 2.A.3.8) family. As to quaternary structure, disulfide-linked heterodimer composed of the catalytic light chain subunit SLC7A8 and the heavy chain subunit SLC3A2. SLC3A2 acts as chaperones for correct plasma membrane trafficking and stabilization of SLC7A8 and modulates the substrate affinity and specificity of SLC7A8. ICAM-1 associates with the heterodimer SLC3A2/SLC7A8; this interaction regulates SLC7A8 activity. As to expression, strongest expression is observed in kidney and moderate expression in placenta and brain, followed by liver, prostate, testis, ovary, lymph node, thymus, spleen, skeletal muscle and heart. Also expressed in fetal liver as well as in the retinal pigment epithelial cell line ARPE-19 and the intestinal epithelial cell line Caco-2.

It localises to the cell membrane. Its subcellular location is the basolateral cell membrane. The catalysed reaction is L-histidine(in) + L-phenylalanine(out) = L-histidine(out) + L-phenylalanine(in). It catalyses the reaction L-tryptophan(in) + L-phenylalanine(out) = L-tryptophan(out) + L-phenylalanine(in). It carries out the reaction L-isoleucine(in) + L-phenylalanine(out) = L-isoleucine(out) + L-phenylalanine(in). The enzyme catalyses L-valine(in) + L-phenylalanine(out) = L-valine(out) + L-phenylalanine(in). The catalysed reaction is L-leucine(in) + L-phenylalanine(out) = L-leucine(out) + L-phenylalanine(in). It catalyses the reaction L-glutamine(in) + L-phenylalanine(out) = L-glutamine(out) + L-phenylalanine(in). It carries out the reaction L-cysteine(in) + L-phenylalanine(out) = L-cysteine(out) + L-phenylalanine(in). The enzyme catalyses L-phenylalanine(out) + L-methionine(in) = L-phenylalanine(in) + L-methionine(out). The catalysed reaction is L-leucine(out) + L-methionine(in) = L-leucine(in) + L-methionine(out). It catalyses the reaction L-cysteine(out) + L-methionine(in) = L-cysteine(in) + L-methionine(out). It carries out the reaction S-methylmercury-L-cysteine(out) + L-methionine(in) = S-methylmercury-L-cysteine(in) + L-methionine(out). The enzyme catalyses S-methylmercury-L-cysteine(in) + L-leucine(out) = S-methylmercury-L-cysteine(out) + L-leucine(in). The catalysed reaction is S-methylmercury-L-cysteine(in) + L-phenylalanine(out) = S-methylmercury-L-cysteine(out) + L-phenylalanine(in). It catalyses the reaction L-phenylalanine(out) + L-serine(in) = L-phenylalanine(in) + L-serine(out). It carries out the reaction L-phenylalanine(out) + glycine(in) = L-phenylalanine(in) + glycine(out). The enzyme catalyses L-phenylalanine(out) + L-alanine(in) = L-phenylalanine(in) + L-alanine(out). The catalysed reaction is 3,3'-diiodo-L-thyronine(out) = 3,3'-diiodo-L-thyronine(in). It catalyses the reaction 3,3',5-triiodo-L-thyronine(out) = 3,3',5-triiodo-L-thyronine(in). It carries out the reaction L-dopa(out) + L-phenylalanine(in) = L-dopa(in) + L-phenylalanine(out). Inhibited by the L-type inhibitor 2-Aminobicyclo-(2,2,1)-heptane-2-carboxylic acid (BCH). Functionally, associates with SLC3A2 to form a functional heterodimeric complex that translocates small and large neutral amino acids with broad specificity and a stoichiometry of 1:1. Functions as amino acid antiporter mediating the influx of extracellular essential amino acids mainly in exchange with the efflux of highly concentrated intracellular amino acids. Has relatively symmetrical selectivities but strongly asymmetrical substrate affinities at both the intracellular and extracellular sides of the transporter. This asymmetry allows SLC7A8 to regulate intracellular amino acid pools (mM concentrations) by exchange with external amino acids (uM concentration range), equilibrating the relative concentrations of different amino acids across the plasma membrane instead of mediating their net uptake. May play an essential role in the reabsorption of neutral amino acids from the epithelial cells to the bloodstream in the kidney. Involved in the uptake of methylmercury (MeHg) when administered as the L-cysteine or D,L-homocysteine complexes, and hence plays a role in metal ion homeostasis and toxicity. Involved in the cellular activity of small molecular weight nitrosothiols, via the stereoselective transport of L-nitrosocysteine (L-CNSO) across the transmembrane. Imports the thyroid hormone diiodothyronine (T2) and to a smaller extent triiodothyronine (T3) but not rT 3 or thyroxine (T4). Mediates the uptake of L-DOPA. May participate in auditory function. This Homo sapiens (Human) protein is Large neutral amino acids transporter small subunit 2.